Consider the following 132-residue polypeptide: DNA-directed RNA polymerase subunit omega (132 aa).

The interval 100–119 (VSAEEEASHGTAGMSAEELE) is disordered.

Belongs to the RNA polymerase subunit omega family. The RNAP catalytic core consists of 2 alpha, 1 beta, 1 beta' and 1 omega subunit. When a sigma factor is associated with the core the holoenzyme is formed, which can initiate transcription.

The enzyme catalyses RNA(n) + a ribonucleoside 5'-triphosphate = RNA(n+1) + diphosphate. Promotes RNA polymerase assembly. Latches the N- and C-terminal regions of the beta' subunit thereby facilitating its interaction with the beta and alpha subunits. The polypeptide is DNA-directed RNA polymerase subunit omega (Gluconacetobacter diazotrophicus (strain ATCC 49037 / DSM 5601 / CCUG 37298 / CIP 103539 / LMG 7603 / PAl5)).